The sequence spans 84 residues: Small ribosomal subunit protein bS16 (84 aa).

Belongs to the bacterial ribosomal protein bS16 family.

This chain is Small ribosomal subunit protein bS16, found in Burkholderia multivorans (strain ATCC 17616 / 249).